We begin with the raw amino-acid sequence, 115 residues long: Procyclic form-specific polypeptide (115 aa).

An N-terminal signal peptide occupies residues 1–27; sequence MAPRSLYLLAVLLFSANLFAGVGFAAA. The disordered stretch occupies residues 27–97; that stretch reads AAEGPEDKGL…PEPEPGAATL (71 aa). A compositionally biased stretch (basic and acidic residues) spans 31–52; sequence PEDKGLTKGGKGKGEKGTKVGA. A glycan (N-linked (GlcNAc...) asparagine) is linked at Asn-56. Tandem repeats lie at residues 59 to 60, 61 to 62, 63 to 64, 65 to 66, 67 to 68, 69 to 70, 71 to 72, 73 to 74, 75 to 76, 77 to 78, 79 to 80, 81 to 82, 83 to 84, 85 to 86, 87 to 88, 89 to 90, and 91 to 92. The interval 59-92 is 17 X 2 AA tandem repeats of [DE]-P; it reads DPDPEPEPEPEPEPEPEPEPEPEPEPEPEPEPEP. Residues 60 to 90 are compositionally biased toward acidic residues; sequence PDPEPEPEPEPEPEPEPEPEPEPEPEPEPEP. A lipid anchor (GPI-anchor amidated glycine) is attached at Gly-93. Positions 94–115 are cleaved as a propeptide — removed in mature form; that stretch reads AATLKSVALPFAIAAAALVAAF.

It is found in the cell membrane. Functionally, major surface antigen of procyclic forms. The sequence is that of Procyclic form-specific polypeptide (PROA) from Trypanosoma brucei brucei.